The primary structure comprises 136 residues: Early E3 15.3 kDa protein (136 aa).

This sequence belongs to the adenoviridae E3_15 family.

Its function is as follows. Protects virus-infected cells from TNF-induced cytolysis. This Human adenovirus B serotype 3 (HAdV-3) protein is Early E3 15.3 kDa protein.